The following is a 500-amino-acid chain: Glycerol kinase (500 aa).

An ADP-binding site is contributed by Thr13. Residues Thr13, Thr14, and Ser15 each coordinate ATP. Residue Thr13 participates in sn-glycerol 3-phosphate binding. An ADP-binding site is contributed by Arg17. Arg83, Glu84, Tyr135, and Asp244 together coordinate sn-glycerol 3-phosphate. Residues Arg83, Glu84, Tyr135, Asp244, and Gln245 each coordinate glycerol. ADP-binding residues include Thr266 and Gly309. 4 residues coordinate ATP: Thr266, Gly309, Gln313, and Gly410. ADP-binding residues include Gly410 and Asn414.

The protein belongs to the FGGY kinase family.

The catalysed reaction is glycerol + ATP = sn-glycerol 3-phosphate + ADP + H(+). It functions in the pathway polyol metabolism; glycerol degradation via glycerol kinase pathway; sn-glycerol 3-phosphate from glycerol: step 1/1. With respect to regulation, inhibited by fructose 1,6-bisphosphate (FBP). Its function is as follows. Key enzyme in the regulation of glycerol uptake and metabolism. Catalyzes the phosphorylation of glycerol to yield sn-glycerol 3-phosphate. The protein is Glycerol kinase of Burkholderia multivorans (strain ATCC 17616 / 249).